The following is a 385-amino-acid chain: Deoxyhypusine synthase (385 aa).

NAD(+) is bound by residues 108–112, 134–136, Glu-140, and Asp-257; these read SNLIS and TAG. 139–140 lines the spermidine pocket; it reads EE. Asp-262 serves as a coordination point for spermidine. An NAD(+)-binding site is contributed by Gly-304. His-309 is a binding site for spermidine. NAD(+) is bound at residue 329–330; sequence TG. Spermidine is bound by residues 335-337 and 344-350; these read GSD and EAVSWGK. Lys-350 (nucleophile) is an active-site residue. 363–364 is a binding site for NAD(+); the sequence is DV.

The protein belongs to the deoxyhypusine synthase family. Requires NAD(+) as cofactor.

The enzyme catalyses [eIF5A protein]-L-lysine + spermidine = [eIF5A protein]-deoxyhypusine + propane-1,3-diamine. Its pathway is protein modification; eIF5A hypusination. Functionally, catalyzes the NAD-dependent oxidative cleavage of spermidine and the subsequent transfer of the butylamine moiety of spermidine to the epsilon-amino group of a specific lysine residue of the eIF-5A precursor protein to form the intermediate deoxyhypusine residue. This is Deoxyhypusine synthase (DYS1) from Candida glabrata (strain ATCC 2001 / BCRC 20586 / JCM 3761 / NBRC 0622 / NRRL Y-65 / CBS 138) (Yeast).